The sequence spans 592 residues: Aspartate--tRNA ligase (592 aa).

E171 lines the L-aspartate pocket. Positions 195-198 (QLFK) are aspartate. R217 is an L-aspartate binding site. ATP contacts are provided by residues 217-219 (RDE) and Q226. H448 is a binding site for L-aspartate. E482 serves as a coordination point for ATP. L-aspartate is bound at residue R489. ATP is bound at residue 534 to 537 (GLDR).

This sequence belongs to the class-II aminoacyl-tRNA synthetase family. Type 1 subfamily. Homodimer.

It is found in the cytoplasm. It carries out the reaction tRNA(Asp) + L-aspartate + ATP = L-aspartyl-tRNA(Asp) + AMP + diphosphate. Catalyzes the attachment of L-aspartate to tRNA(Asp) in a two-step reaction: L-aspartate is first activated by ATP to form Asp-AMP and then transferred to the acceptor end of tRNA(Asp). The polypeptide is Aspartate--tRNA ligase (Vibrio atlanticus (strain LGP32) (Vibrio splendidus (strain Mel32))).